The sequence spans 102 residues: Co-chaperonin GroES (102 aa).

The protein belongs to the GroES chaperonin family. As to quaternary structure, heptamer of 7 subunits arranged in a ring. Interacts with the chaperonin GroEL.

The protein localises to the cytoplasm. Its function is as follows. Together with the chaperonin GroEL, plays an essential role in assisting protein folding. The GroEL-GroES system forms a nano-cage that allows encapsulation of the non-native substrate proteins and provides a physical environment optimized to promote and accelerate protein folding. GroES binds to the apical surface of the GroEL ring, thereby capping the opening of the GroEL channel. In Chlamydia trachomatis serovar D (strain ATCC VR-885 / DSM 19411 / UW-3/Cx), this protein is Co-chaperonin GroES.